The primary structure comprises 184 residues: Trypsin/chymotrypsin inhibitor (184 aa).

2 disulfide bridges follow: cysteine 39–cysteine 84 and cysteine 136–cysteine 147.

This sequence belongs to the protease inhibitor I3 (leguminous Kunitz-type inhibitor) family. In terms of assembly, homodimer.

In terms of biological role, inhibits trypsin and alpha-chymotrypsin. The protein is Trypsin/chymotrypsin inhibitor of Alocasia macrorrhizos (Giant taro).